Consider the following 383-residue polypeptide: Lipid-A-disaccharide synthase (383 aa).

It belongs to the LpxB family.

It catalyses the reaction a lipid X + a UDP-2-N,3-O-bis[(3R)-3-hydroxyacyl]-alpha-D-glucosamine = a lipid A disaccharide + UDP + H(+). It participates in bacterial outer membrane biogenesis; LPS lipid A biosynthesis. Its function is as follows. Condensation of UDP-2,3-diacylglucosamine and 2,3-diacylglucosamine-1-phosphate to form lipid A disaccharide, a precursor of lipid A, a phosphorylated glycolipid that anchors the lipopolysaccharide to the outer membrane of the cell. In Anaeromyxobacter dehalogenans (strain 2CP-1 / ATCC BAA-258), this protein is Lipid-A-disaccharide synthase.